The primary structure comprises 470 residues: Cyclin-B1-3 (470 aa).

Belongs to the cyclin family. Cyclin AB subfamily.

The polypeptide is Cyclin-B1-3 (CYCB1-3) (Oryza sativa subsp. japonica (Rice)).